The chain runs to 547 residues: T-complex protein 1 subunit gamma (547 aa).

G41 is an ADP binding site. Residue G41 participates in ATP binding. D92 is a Mg(2+) binding site. Residues G93, T94, T95, S96, T161, and K162 each coordinate ADP. G93, T94, and T95 together coordinate ATP. C365 and C371 are joined by a disulfide. The ADP site is built by G410, G481, E482, E496, and K501. G410 and G481 together coordinate ATP. Residue E496 participates in ATP binding. A compositionally biased stretch (basic and acidic residues) spans 525–534; the sequence is HKKKGEDHGR. The segment at 525-547 is disordered; sequence HKKKGEDHGRQPAAAPEAPQQAE. Residues 535 to 547 show a composition bias toward low complexity; the sequence is QPAAAPEAPQQAE.

Belongs to the TCP-1 chaperonin family. In terms of assembly, component of the chaperonin-containing T-complex (TRiC), a hexadecamer composed of two identical back-to-back stacked rings enclosing a protein folding chamber. Each ring is made up of eight different subunits: TCP1/CCT1, CCT2, CCT3, CCT4, CCT5, CCT6A/CCT6, CCT7, CCT8.

The protein localises to the cytoplasm. The catalysed reaction is ATP + H2O = ADP + phosphate + H(+). In terms of biological role, component of the chaperonin-containing T-complex (TRiC), a molecular chaperone complex that assists the folding of actin, tubulin and other proteins upon ATP hydrolysis. The polypeptide is T-complex protein 1 subunit gamma (cct3) (Xenopus laevis (African clawed frog)).